We begin with the raw amino-acid sequence, 53 residues long: Bowman-Birk type proteinase inhibitor 1 (53 aa).

Cystine bridges form between Cys-9/Cys-24, Cys-12/Cys-51, Cys-14/Cys-22, Cys-31/Cys-38, and Cys-40/Cys-48.

In terms of assembly, dimer.

Functionally, inhibits trypsin (IC(50)=6.20 nM), neutrophil elastase (ELANE) and, to a lesser extent, alpha-chymotrypsin (IC(50)=3.44 uM). The sequence is that of Bowman-Birk type proteinase inhibitor 1 from Lathyrus sativus (White vetchling).